The sequence spans 83 residues: Homeobox protein DLX-2 (83 aa).

Residues 1–14 (STATDSSYYTNQQH) show a composition bias toward polar residues. 2 disordered regions span residues 1 to 27 (STAT…SPYA) and 63 to 83 (PYGT…LEPE).

This sequence belongs to the distal-less homeobox family. In terms of assembly, interacts (via homeobox DNA-binding domain) with POU4F2; this interaction enhances retinal ganglion cell (RGC) differentiation.

It localises to the nucleus. Its function is as follows. Acts as a transcriptional activator. Activates transcription of CGA/alpha-GSU, via binding to the downstream activin regulatory element (DARE) in the gene promoter. Plays a role in terminal differentiation of interneurons, such as amacrine and bipolar cells in the developing retina. Likely to play a regulatory role in the development of the ventral forebrain. May play a role in craniofacial patterning and morphogenesis. The sequence is that of Homeobox protein DLX-2 (Dlx2) from Rattus norvegicus (Rat).